Here is a 522-residue protein sequence, read N- to C-terminus: Sensory neuron membrane protein 1 (522 aa).

Residues 1 to 11 (MKLPKHLKFAA) are Cytoplasmic-facing. A helical transmembrane segment spans residues 12-32 (GAGGAFLFGILFGWVMFPAIL). Topologically, residues 33 to 455 (KGQLKKEMAL…KFQLFYPKKA (423 aa)) are extracellular. 2 N-linked (GlcNAc...) asparagine glycosylation sites follow: asparagine 67 and asparagine 229. Intrachain disulfides connect cysteine 268/cysteine 333, cysteine 297/cysteine 350, and cysteine 335/cysteine 339. An N-linked (GlcNAc...) asparagine glycan is attached at asparagine 438. A helical membrane pass occupies residues 456 to 476 (VGVIKWLLVTFGGFGLIGCTI). Residues 477-522 (YHYKDRIMSFASSPGSAAVTKVKPEEVEQKDVSVIGQPQEPAKINM) lie on the Cytoplasmic side of the membrane.

The protein belongs to the CD36 family.

The protein resides in the cell membrane. Its function is as follows. Plays an olfactory role that is not restricted to pheromone sensitivity. This Plutella xylostella (Diamondback moth) protein is Sensory neuron membrane protein 1.